The chain runs to 60 residues: Large ribosomal subunit protein bL32 (60 aa).

The span at 1-23 (MAKHPVPKKKTSKARRDARRSHH) shows a compositional bias: basic residues. The tract at residues 1–28 (MAKHPVPKKKTSKARRDARRSHHALTPP) is disordered.

It belongs to the bacterial ribosomal protein bL32 family. Part of the 50S ribosomal subunit.

In terms of biological role, found on the solvent side of the large subunit. The sequence is that of Large ribosomal subunit protein bL32 (rpmF) from Thermus thermophilus (strain ATCC BAA-163 / DSM 7039 / HB27).